Consider the following 330-residue polypeptide: Probable L-asparaginase (330 aa).

Positions Pro6–Tyr330 constitute an Asparaginase/glutaminase domain. The active-site O-isoaspartyl threonine intermediate is Thr16. Residues Ser62 and Thr95–Asp96 contribute to the substrate site.

The protein belongs to the asparaginase 1 family.

The protein resides in the cytoplasm. The enzyme catalyses L-asparagine + H2O = L-aspartate + NH4(+). This is Probable L-asparaginase (ansA) from Helicobacter pylori (strain ATCC 700392 / 26695) (Campylobacter pylori).